Here is a 489-residue protein sequence, read N- to C-terminus: Glucose-6-phosphate isomerase (489 aa).

Glutamate 309 serves as the catalytic Proton donor. Active-site residues include histidine 340 and lysine 459.

The protein belongs to the GPI family.

The protein localises to the cytoplasm. It carries out the reaction alpha-D-glucose 6-phosphate = beta-D-fructose 6-phosphate. Its pathway is carbohydrate biosynthesis; gluconeogenesis. It participates in carbohydrate degradation; glycolysis; D-glyceraldehyde 3-phosphate and glycerone phosphate from D-glucose: step 2/4. Functionally, catalyzes the reversible isomerization of glucose-6-phosphate to fructose-6-phosphate. In Idiomarina loihiensis (strain ATCC BAA-735 / DSM 15497 / L2-TR), this protein is Glucose-6-phosphate isomerase.